Here is a 59-residue protein sequence, read N- to C-terminus: Small ribosomal subunit protein bS21 (59 aa).

The tract at residues 40-59 (KPSIKKRAKSKAALKYKKQR) is disordered.

This sequence belongs to the bacterial ribosomal protein bS21 family.

The protein is Small ribosomal subunit protein bS21 of Protochlamydia amoebophila (strain UWE25).